Consider the following 244-residue polypeptide: Uridylate kinase (244 aa).

17–20 (KVSG) is a binding site for ATP. An involved in allosteric activation by GTP region spans residues 25-30 (GDKGFG). Gly59 lines the UMP pocket. Residues Gly60 and Arg64 each coordinate ATP. Residues Asp80 and 141–148 (VGNPFFTT) each bind UMP. ATP-binding residues include Thr168, Gln169, Tyr174, and Asp177.

It belongs to the UMP kinase family. Homohexamer.

Its subcellular location is the cytoplasm. It carries out the reaction UMP + ATP = UDP + ADP. It functions in the pathway pyrimidine metabolism; CTP biosynthesis via de novo pathway; UDP from UMP (UMPK route): step 1/1. Allosterically activated by GTP. Inhibited by UTP. Catalyzes the reversible phosphorylation of UMP to UDP. The polypeptide is Uridylate kinase (Ehrlichia ruminantium (strain Welgevonden)).